Consider the following 437-residue polypeptide: 2-methylisoborneol synthase (437 aa).

Residues 32-125 are disordered; it reads AHDSEATVGG…IPGLYHHPVP (94 aa). Pro residues predominate over residues 59-73; that stretch reads PPSPAAPPTDVPAPE. Mg(2+)-binding residues include Asp-194, Asp-195, Glu-199, Asn-342, Ser-346, and Glu-350.

The protein belongs to the terpene synthase family. 2-methylisoborneol synthase subfamily. Mg(2+) serves as cofactor.

It catalyses the reaction (E)-2-methylgeranyl diphosphate + H2O = 2-methylisoborneol + diphosphate. In terms of biological role, catalyzes the cyclization of 2-methylgeranyl diphosphate (2-MeGPP) to 2-methylisoborneol (2-MIB), which likely involves the intermediacy of 2-methyllinalyl diphosphate. The polypeptide is 2-methylisoborneol synthase (Streptomyces griseus).